A 271-amino-acid chain; its full sequence is Formamidopyrimidine-DNA glycosylase (271 aa).

Pro2 functions as the Schiff-base intermediate with DNA in the catalytic mechanism. Glu3 (proton donor) is an active-site residue. Lys58 functions as the Proton donor; for beta-elimination activity in the catalytic mechanism. DNA-binding residues include His91, Arg110, and Arg152. The segment at 237–271 (LVYGREGQPCVHCGRPIRCETIGQRSSYFCTRCQR) adopts an FPG-type zinc-finger fold. The active-site Proton donor; for delta-elimination activity is the Arg261.

The protein belongs to the FPG family. In terms of assembly, monomer. Zn(2+) is required as a cofactor.

The catalysed reaction is Hydrolysis of DNA containing ring-opened 7-methylguanine residues, releasing 2,6-diamino-4-hydroxy-5-(N-methyl)formamidopyrimidine.. It carries out the reaction 2'-deoxyribonucleotide-(2'-deoxyribose 5'-phosphate)-2'-deoxyribonucleotide-DNA = a 3'-end 2'-deoxyribonucleotide-(2,3-dehydro-2,3-deoxyribose 5'-phosphate)-DNA + a 5'-end 5'-phospho-2'-deoxyribonucleoside-DNA + H(+). Its function is as follows. Involved in base excision repair of DNA damaged by oxidation or by mutagenic agents. Acts as a DNA glycosylase that recognizes and removes damaged bases. Has a preference for oxidized purines, such as 7,8-dihydro-8-oxoguanine (8-oxoG). Has AP (apurinic/apyrimidinic) lyase activity and introduces nicks in the DNA strand. Cleaves the DNA backbone by beta-delta elimination to generate a single-strand break at the site of the removed base with both 3'- and 5'-phosphates. The sequence is that of Formamidopyrimidine-DNA glycosylase from Syntrophotalea carbinolica (strain DSM 2380 / NBRC 103641 / GraBd1) (Pelobacter carbinolicus).